Here is a 443-residue protein sequence, read N- to C-terminus: Exodeoxyribonuclease 7 large subunit (443 aa).

The protein belongs to the XseA family. As to quaternary structure, heterooligomer composed of large and small subunits.

It is found in the cytoplasm. It carries out the reaction Exonucleolytic cleavage in either 5'- to 3'- or 3'- to 5'-direction to yield nucleoside 5'-phosphates.. Functionally, bidirectionally degrades single-stranded DNA into large acid-insoluble oligonucleotides, which are then degraded further into small acid-soluble oligonucleotides. This is Exodeoxyribonuclease 7 large subunit from Legionella pneumophila (strain Paris).